We begin with the raw amino-acid sequence, 781 residues long: N-acetylneuraminate (7)9-O-acetyltransferase (781 aa).

The Cytoplasmic segment spans residues 1-15 (MAVLAYNLGKREINQ). A helical membrane pass occupies residues 16–36 (YFSIKNAKLLAAAAVVLLTVF). At 37 to 308 (HAASRHYGSS…SAPPLSVLQK (272 aa)) the chain is on the lumenal side. Residue Ser94 is the Acyl-ester intermediate of the active site. N-linked (GlcNAc...) asparagine glycosylation is found at Asn139, Asn185, and Asn239. Active-site residues include Asp264 and His267. Residues 309–329 (LAAAVLLVSVVCFVLLGFSSH) form a helical membrane-spanning segment. A disordered region spans residues 330-350 (RKSRPAPDVESGEEKKHPAAV). The Cytoplasmic segment spans residues 330–354 (RKSRPAPDVESGEEKKHPAAVGQLN). The chain crosses the membrane as a helical span at residues 355–375 (PKGPLLAIGKMSLIMLYFYLC). Residues 376–386 (DRADIFMKEQK) are Lumenal-facing. A helical membrane pass occupies residues 387 to 407 (FYTHSAFFIPLIYIFVLGVFY). Residues 408–430 (SENSKETKLLNREQTDEWKGWMQ) are Cytoplasmic-facing. A helical membrane pass occupies residues 431 to 451 (LVILIYHISGASAFIPVYMHV). Position 452 (Arg452) is a topological domain, lumenal. Residues 453 to 473 (VLVAAYLFQTGYGHFSFFWLK) form a helical membrane-spanning segment. Over 474 to 477 (GDFG) the chain is Cytoplasmic. The chain crosses the membrane as a helical span at residues 478–498 (LYRVCQVLFRLNFLVVVLCLV). Topologically, residues 499–504 (MDRPYQ) are lumenal. A helical membrane pass occupies residues 505–525 (FYYFVPLVTFWFAVIYATMAL). The Cytoplasmic portion of the chain corresponds to 526 to 537 (WPQILQKQANGS). A helical membrane pass occupies residues 538 to 558 (AFWNLALLLKLLGLLLFIGFF). The Lumenal portion of the chain corresponds to 559 to 595 (AYSQELFEGIFSVWPLSKLFELQGSIHEWWFRWKLDR). Residues 596 to 616 (FAVVNGMLFAFIYLLLQKYQL) traverse the membrane as a helical segment. Residues 617-629 (LSEGKGEPLFSNK) lie on the Cytoplasmic side of the membrane. The chain crosses the membrane as a helical span at residues 630 to 650 (ISNCLLFVSVVSFMTYSIWAS). Residues 651–660 (GCKNKSECNE) are Lumenal-facing. N-linked (GlcNAc...) asparagine glycosylation is present at Asn654. The chain crosses the membrane as a helical span at residues 661–681 (MHPYISVILAFILIRNIPGYA). Residues 682 to 687 (RSLYSS) lie on the Cytoplasmic side of the membrane. The chain crosses the membrane as a helical span at residues 688-708 (FFAWFGKISLELFICQYHIWL). The Lumenal portion of the chain corresponds to 709–714 (AADTKG). A helical membrane pass occupies residues 715–735 (ILVLIPGNPTLNIIVSTFIFV). Over 736–756 (CVAHEISQITNDLAQVAIPKE) the chain is Cytoplasmic. Residues 757–777 (SGPLLKRLLGAGVFLVLVLTL) form a helical membrane-spanning segment. Residues 778–781 (SQKD) are Lumenal-facing.

The protein belongs to the PC-esterase family. CASD1 subfamily.

Its subcellular location is the golgi apparatus membrane. It carries out the reaction CMP-N-acetyl-beta-neuraminate + acetyl-CoA = CMP-N-acetyl-9-O-acetyl-beta-neuraminate + CoA. It catalyses the reaction a ganglioside GD3 (d18:1(4E)) + acetyl-CoA = a ganglioside Ac-O-7-GD3(d18:1(4E)) + CoA. The catalysed reaction is CMP-N-acetyl-beta-neuraminate + acetyl-CoA = CMP-N-acetyl-7-O-acetyl-beta-neuraminate + CoA. In terms of biological role, key enzyme in the biosynthesis of O-acetylated (O-Ac) sialoglycans such as gangliosides O-AcGD3 and O-AcGD2, which affect various processes such as cell-cell interactions, host-pathogen recognition. Catalyzes the transfer of an acetyl group from a donor, the acetyl-coenzyme-A molecule (acetyl-CoA), to the C7/8/9 OH-position of a sialic acid residue. The primary site of O-acetyl group transfer on sialic acid seems to depend on cell type and can be C7, from which the O-acetyl group could subsequently migrate to the C8 and then to the C9 position, or at C9 with possibility of migrating to the C8 and then to the C7 position. Together with ST8SIA1 (GD3 synthase) it increases the levels of ganglioside Ac-O-7-GD3. Can transfer the acetyl group from acetyl-CoA to free sialate (N-acetylneuraminate, Neu5Ac) in vitro, but has preferred substrate specificity for CMP-activated sialate (CMP-Neu5Ac), resulting in the formation of 9-O-acetylated CMP-Neu5Ac (CMP-Neu5,9Ac2). CMP-Neu5,9Ac2 may be used by sialyltransferases as a sialate donor for glycoconjugate acceptors such as ganglioside GD3. O-acetylation at position C9 of ganglioside GD3 can counteract the pro-apoptotic effects of the ganglioside GD3 in tumor cells. This is N-acetylneuraminate (7)9-O-acetyltransferase from Danio rerio (Zebrafish).